A 973-amino-acid polypeptide reads, in one-letter code: E3 ubiquitin-protein ligase BRE1A (973 aa).

A disordered region spans residues Met1 to Leu37. Lys21 bears the N6-acetyllysine mark. Ser41 carries the post-translational modification Phosphoserine. Residues Thr43–Leu90 adopt a coiled-coil conformation. Residues Val128–Glu153 are disordered. Residues Ser136 and Ser138 each carry the phosphoserine modification. The span at Asn139 to Gly151 shows a compositional bias: basic and acidic residues. Coiled coils occupy residues Glu168–Thr378 and Ser429–Lys896. Lys348 and Lys510 each carry N6-acetyllysine. Residues Asp507–Glu620 are disordered. A Phosphoserine modification is found at Ser522. Composition is skewed to basic and acidic residues over residues Glu527–Ala544 and Ser553–Glu620. Ser560 is modified (phosphoserine). An RING-type zinc finger spans residues Cys920 to Asn959.

This sequence belongs to the BRE1 family. In terms of assembly, component of the RNF20/40 complex (also known as BRE1 complex) probably composed of 2 copies of RNF20/BRE1A and 2 copies of RNF40/BRE1B. Interacts with UBE2E1/UBCH6. Interacts with p53/TP53 and WAC. Interacts with PAF1; the interaction mediates the association of the PAF1 and RNF20/40 complexes which is a prerequsite for recruitment of UBE2A/B. Interacts with PA2G4. Interacts with FBXL19.

Its subcellular location is the nucleus. The enzyme catalyses S-ubiquitinyl-[E2 ubiquitin-conjugating enzyme]-L-cysteine + [acceptor protein]-L-lysine = [E2 ubiquitin-conjugating enzyme]-L-cysteine + N(6)-ubiquitinyl-[acceptor protein]-L-lysine.. It participates in protein modification; protein ubiquitination. Component of the RNF20/40 E3 ubiquitin-protein ligase complex that mediates monoubiquitination of 'Lys-120' of histone H2B (H2BK120ub1). H2BK120ub1 gives a specific tag for epigenetic transcriptional activation and is also prerequisite for histone H3 'Lys-4' and 'Lys-79' methylation (H3K4me and H3K79me, respectively). It thereby plays a central role in histone code and gene regulation. The RNF20/40 complex forms a H2B ubiquitin ligase complex in cooperation with the E2 enzyme UBE2A or UBE2B; reports about the cooperation with UBE2E1/UBCH are contradictory. Required for transcriptional activation of Hox genes. Recruited to the MDM2 promoter, probably by being recruited by p53/TP53, and thereby acts as a transcriptional coactivator. Mediates the polyubiquitination of PA2G4 leading to its proteasome-mediated degradation. In Mus musculus (Mouse), this protein is E3 ubiquitin-protein ligase BRE1A (Rnf20).